Reading from the N-terminus, the 927-residue chain is Sodium/calcium exchanger 3 (927 aa).

The first 30 residues, 1–30, serve as a signal peptide directing secretion; sequence MAWLRLQPLTSAFLHFGLVTFVLFLNGLRA. At 31–73 the chain is on the extracellular side; the sequence is EAGDLRDVPSAGQNNESCSGSSDCKEGVILPIWYPENPSLGDK. Asn-45 carries N-linked (GlcNAc...) asparagine glycosylation. Residues 74–94 form a helical membrane-spanning segment; sequence IARVIVYFVALIYMFLGVSII. Topologically, residues 95–147 are cytoplasmic; it reads ADRFMASIEVITSQEREVTIKKPNGETSTTTIRVWNETVSNLTLMALGSSAPE. An Alpha-1 repeat occupies 140–180; the sequence is ALGSSAPEILLSLIEVCGHGFIAGDLGPSTIVGSAAFNMFI. Residues 148-168 traverse the membrane as a helical segment; sequence ILLSLIEVCGHGFIAGDLGPS. A topological domain (extracellular) is located at residue Thr-169. Residues 170-190 form a helical membrane-spanning segment; that stretch reads IVGSAAFNMFIIIGICVYVIP. Topologically, residues 191–202 are cytoplasmic; it reads DGETRKIKHLRV. The chain crosses the membrane as a helical span at residues 203 to 223; that stretch reads FFVTAAWSVFAYIWLYMILAV. Residues 224-230 are Extracellular-facing; it reads FSPGVVQ. The chain crosses the membrane as a helical span at residues 231 to 251; it reads VWEGLLTLFFFPVCVLLAWVA. The Cytoplasmic segment spans residues 252 to 726; that stretch reads DKRLLFYKYM…DESGEERLPS (475 aa). The segment at 253–272 is putative calmodulin-binding region; the sequence is KRLLFYKYMHKRYRTDKHRG. Calx-beta domains are found at residues 386-485 and 519-619; these read VHTD…VRLS and ATVT…IALG. Residues Glu-409, Asp-445, Asp-470, Asp-471, Ile-473, Glu-475, Glu-478, Asp-525, Asp-526, Asp-527, Glu-543, Asp-579, Glu-606, Glu-607, and Glu-672 each contribute to the Ca(2+) site. Residues 727–747 form a helical membrane-spanning segment; that stretch reads CFDYVMHFLTVFWKVLFACVP. Residues 748–754 lie on the Extracellular side of the membrane; it reads PTEYCHG. The chain crosses the membrane as a helical span at residues 755–775; it reads WACFVVSILIIGMLTAIIGDL. Residues 776-778 lie on the Cytoplasmic side of the membrane; the sequence is ASH. Residues 779–799 form a helical membrane-spanning segment; sequence FGCTIGLKDSVTAVVFVAFGT. One copy of the Alpha-2 repeat lies at 796-832; that stretch reads AFGTSVPDTFASKAAALQDVYADASIGNVTGSNAVNV. Topologically, residues 800–828 are extracellular; it reads SVPDTFASKAAALQDVYADASIGNVTGSN. A glycan (N-linked (GlcNAc...) asparagine) is linked at Asn-823. A helical membrane pass occupies residues 829–849; the sequence is AVNVFLGIGLAWSVAAIYWAM. The Cytoplasmic portion of the chain corresponds to 850–860; that stretch reads QGQEFHVSAGT. The chain crosses the membrane as a helical span at residues 861–881; it reads LAFSVTLFTIFAFVCLSVLLY. Topologically, residues 882 to 903 are extracellular; sequence RRRPHLGGELGGPRGCKLATTW. A helical membrane pass occupies residues 904–924; sequence LFVSLWLLYVLFATLEAYCYI. Residues 925-927 lie on the Cytoplasmic side of the membrane; the sequence is KGF.

This sequence belongs to the Ca(2+):cation antiporter (CaCA) (TC 2.A.19) family. SLC8 subfamily. As to quaternary structure, interacts with AKAP1. As to expression, detected in neurons in brain cortex and hippocampus. Detected in pyramidal cell bodies and processes, in granule cells and interneurons in the CA1 and CA3 region of the hippocampus. Detected on astrocyte processes in brain cortex. Detected on endothelial cells in hippocampus capillaries (at protein level). Restricted to brain and skeletal muscle.

It is found in the cell membrane. Its subcellular location is the perikaryon. The protein resides in the cell projection. It localises to the dendrite. The protein localises to the dendritic spine. It is found in the sarcolemma. Its subcellular location is the cytoplasm. The protein resides in the sarcoplasm. It localises to the cell junction. The protein localises to the mitochondrion outer membrane. It is found in the endoplasmic reticulum membrane. Its subcellular location is the perinuclear region. The enzyme catalyses Ca(2+)(in) + 3 Na(+)(out) = Ca(2+)(out) + 3 Na(+)(in). Its activity is regulated as follows. Calcium transport is down-regulated by Na(+) and stimulated by Ca(2+). Functionally, mediates the electrogenic exchange of Ca(2+) against Na(+) ions across the cell membrane, and thereby contributes to the regulation of cytoplasmic Ca(2+) levels and Ca(2+)-dependent cellular processes. Contributes to cellular Ca(2+) homeostasis in excitable cells, both in muscle and in brain. In a first phase, voltage-gated channels mediate the rapid increase of cytoplasmic Ca(2+) levels due to release of Ca(2+) stores from the endoplasmic reticulum. SLC8A3 mediates the export of Ca(2+) from the cell during the next phase, so that cytoplasmic Ca(2+) levels rapidly return to baseline. Contributes to Ca(2+) transport during excitation-contraction coupling in muscle. In neurons, contributes to the rapid decrease of cytoplasmic Ca(2+) levels back to baseline after neuronal activation, and thereby contributes to modulate synaptic plasticity, learning and memory. Required for normal oligodendrocyte differentiation and for normal myelination. Mediates Ca(2+) efflux from mitochondria and contributes to mitochondrial Ca(2+) ion homeostasis. The protein is Sodium/calcium exchanger 3 (Slc8a3) of Rattus norvegicus (Rat).